Reading from the N-terminus, the 399-residue chain is La protein 2 (399 aa).

Residues S3–E106 form the HTH La-type RNA-binding domain. One can recognise an RRM domain in the interval R115–D192. One can recognise a xRRM domain in the interval S269 to P399. The segment at A367–P399 is disordered. Over residues E370–C385 the composition is skewed to basic and acidic residues.

Expressed ubiquitously (at protein level).

It is found in the nucleus. The protein localises to the nucleoplasm. It localises to the nucleolus. In terms of biological role, binds to the 3' poly(U) terminus of nascent RNA polymerase III transcripts, protecting them from exonuclease digestion and facilitating their folding and maturation. In Arabidopsis thaliana (Mouse-ear cress), this protein is La protein 2 (LA2).